Here is a 312-residue protein sequence, read N- to C-terminus: MYLSKNFFLNLKTFIFSFFVLCFFSQSAQAYPIFAKQYFSSPREVSGRIACSYCHLAQKPVELSVPQSVFPNTVFEAVIKVPYDKTVKQVSGQGSKFGLNIGAILILPEGFTLAPVDRLSESLKKKTAGLSFLPYNNNNKSTFMVGPVSGDKYDKLVFPVLSPDYGPNTAFLKSAVYVGGNRGRGQIYPNGEKSNNNLFASSSNGVVSEIKSTKNGGFEVVITTNDGNSVVENIGSGATIIVQEGQQVKAEQPLTTDPNVGGFGQSETEIGLQNPIRVQGLLLFSLFILLAQIFLVLKKKQFEKVQLFEMNF.

The N-terminal stretch at methionine 1–alanine 30 is a signal peptide. The heme site is built by tyrosine 31, cysteine 51, cysteine 54, and histidine 55. Residues valine 278–lysine 298 form a helical membrane-spanning segment.

It belongs to the cytochrome f family. In terms of assembly, the 4 large subunits of the cytochrome b6-f complex are cytochrome b6, subunit IV (17 kDa polypeptide, petD), cytochrome f and the Rieske protein, while the 4 small subunits are PetG, PetL, PetM and PetN. The complex functions as a dimer. The cofactor is heme.

Its subcellular location is the plastid. The protein localises to the chloroplast thylakoid membrane. Component of the cytochrome b6-f complex, which mediates electron transfer between photosystem II (PSII) and photosystem I (PSI), cyclic electron flow around PSI, and state transitions. This is Cytochrome f (petA) from Bigelowiella natans (Pedinomonas minutissima).